We begin with the raw amino-acid sequence, 66 residues long: DNA-directed RNA polymerase subunit Rpo10 (66 aa).

Residues cysteine 7, cysteine 10, cysteine 47, and cysteine 48 each coordinate Zn(2+).

The protein belongs to the archaeal Rpo10/eukaryotic RPB10 RNA polymerase subunit family. As to quaternary structure, part of the RNA polymerase complex. The cofactor is Zn(2+).

It is found in the cytoplasm. The enzyme catalyses RNA(n) + a ribonucleoside 5'-triphosphate = RNA(n+1) + diphosphate. In terms of biological role, DNA-dependent RNA polymerase (RNAP) catalyzes the transcription of DNA into RNA using the four ribonucleoside triphosphates as substrates. This is DNA-directed RNA polymerase subunit Rpo10 from Haloarcula marismortui (strain ATCC 43049 / DSM 3752 / JCM 8966 / VKM B-1809) (Halobacterium marismortui).